We begin with the raw amino-acid sequence, 481 residues long: Matrilin-3 (481 aa).

Positions 1-27 (MLLSAPLRHLPGLLLLLWPLLLLPSLA) are cleaved as a signal peptide. One can recognise a VWFA domain in the interval 78–253 (DLVFIIDSSR…GVIEKLSARF (176 aa)). An Omega-N-methylarginine modification is found at arginine 193. EGF-like domains are found at residues 259-300 (ALDQ…KTCS), 301-342 (AIDK…RTCA), 343-384 (ALDK…KTCS), and 385-426 (VRNK…KTCS). 12 disulfides stabilise this stretch: cysteine 263/cysteine 274, cysteine 270/cysteine 284, cysteine 286/cysteine 299, cysteine 305/cysteine 316, cysteine 312/cysteine 326, cysteine 328/cysteine 341, cysteine 347/cysteine 358, cysteine 354/cysteine 368, cysteine 370/cysteine 383, cysteine 389/cysteine 400, cysteine 396/cysteine 410, and cysteine 412/cysteine 425. N-linked (GlcNAc...) asparagine glycosylation occurs at asparagine 321. Serine 436 carries the post-translational modification Phosphoserine; by FAM20C. Residues 451 to 475 (EKVSSHLQKLNTKLDNILKKLKVTE) adopt a coiled-coil conformation.

Can form homooligomers (monomers, dimers, trimers and tetramers) and heterooligomers with matrilin-1. Interacts with COMP. Component of a complex containing at least CRELD2, MANF, MATN3 and PDIA4. In terms of tissue distribution, strongly expressed in growing skeletal tissue such as epiphyseal growth plate or in bone undergoing growth and remodeling. In the bone, actively synthesized in osteoblasts and osteocytes. Expressed in cartilage of sternum, femur, vertebrae, trachea, articular and epiphyseal cartilage, cartilage of developing bones and bones.

It is found in the secreted. Its function is as follows. Major component of the extracellular matrix of cartilage and may play a role in the formation of extracellular filamentous networks. This is Matrilin-3 (Matn3) from Mus musculus (Mouse).